The chain runs to 294 residues: Bifunctional protein FolD (294 aa).

Residues 175–177 (GAS) and I241 contribute to the NADP(+) site.

It belongs to the tetrahydrofolate dehydrogenase/cyclohydrolase family. Homodimer.

The catalysed reaction is (6R)-5,10-methylene-5,6,7,8-tetrahydrofolate + NADP(+) = (6R)-5,10-methenyltetrahydrofolate + NADPH. It carries out the reaction (6R)-5,10-methenyltetrahydrofolate + H2O = (6R)-10-formyltetrahydrofolate + H(+). It functions in the pathway one-carbon metabolism; tetrahydrofolate interconversion. Functionally, catalyzes the oxidation of 5,10-methylenetetrahydrofolate to 5,10-methenyltetrahydrofolate and then the hydrolysis of 5,10-methenyltetrahydrofolate to 10-formyltetrahydrofolate. The protein is Bifunctional protein FolD of Hahella chejuensis (strain KCTC 2396).